Reading from the N-terminus, the 147-residue chain is Lysozyme C (147 aa).

The N-terminal stretch at 1–18 (MRSLLILVLCFLPLAALG) is a signal peptide. Residues 19-147 (KVYGRCELAA…VHAWIRGCRL (129 aa)) form the C-type lysozyme domain. 4 disulfides stabilise this stretch: C24–C145, C48–C133, C82–C98, and C94–C112.

The protein belongs to the glycosyl hydrolase 22 family. As to quaternary structure, monomer.

The protein resides in the secreted. It carries out the reaction Hydrolysis of (1-&gt;4)-beta-linkages between N-acetylmuramic acid and N-acetyl-D-glucosamine residues in a peptidoglycan and between N-acetyl-D-glucosamine residues in chitodextrins.. In terms of biological role, lysozymes have primarily a bacteriolytic function; those in tissues and body fluids are associated with the monocyte-macrophage system and enhance the activity of immunoagents. This chain is Lysozyme C (LYZ), found in Meleagris gallopavo (Wild turkey).